We begin with the raw amino-acid sequence, 290 residues long: Bifunctional protein FolD (290 aa).

Residues Gly-169 to Ser-171, Ile-194, and Ile-235 contribute to the NADP(+) site.

The protein belongs to the tetrahydrofolate dehydrogenase/cyclohydrolase family. In terms of assembly, homodimer.

It catalyses the reaction (6R)-5,10-methylene-5,6,7,8-tetrahydrofolate + NADP(+) = (6R)-5,10-methenyltetrahydrofolate + NADPH. It carries out the reaction (6R)-5,10-methenyltetrahydrofolate + H2O = (6R)-10-formyltetrahydrofolate + H(+). It participates in one-carbon metabolism; tetrahydrofolate interconversion. Functionally, catalyzes the oxidation of 5,10-methylenetetrahydrofolate to 5,10-methenyltetrahydrofolate and then the hydrolysis of 5,10-methenyltetrahydrofolate to 10-formyltetrahydrofolate. The polypeptide is Bifunctional protein FolD (Helicobacter pylori (strain J99 / ATCC 700824) (Campylobacter pylori J99)).